The following is a 532-amino-acid chain: 5-methylcytosine-modifying enzyme 1 (532 aa).

Residue 335–337 (SLT) coordinates L-ascorbate. 3 residues coordinate Fe cation: histidine 345, aspartate 347, and histidine 397. 397 to 399 (HGT) contacts L-ascorbate.

This sequence belongs to the TET family. Fe(2+) serves as cofactor.

The protein resides in the nucleus. The enzyme catalyses a 5-methyl-2'-deoxycytidine in DNA + L-ascorbate + O2 = a (8S,9S)-5-glyceryl-2'-deoxycytidine in DNA + glyoxylate + CO2. It catalyses the reaction a 5-methyl-2'-deoxycytidine in DNA + L-ascorbate + O2 = a (8S,9R)-5-glyceryl-2'-deoxycytidine in DNA + glyoxylate + CO2. In terms of biological role, dioxygenase that catalyzes DNA modification by mediating the conversion of the modified genomic base 5-methylcytosine (5mC) into 5-glyceryl-methylcytosine (5gmC). Catalyzes the conjugation of a glyceryl moiety from L-ascorbate (vitamin C) to the methyl group of 5mC through a carbon-carbon bond. 5gmC DNA modification may be required during photosynthesis as an epigenetic mark that couteracts DNA methylation. In Chlamydomonas reinhardtii (Chlamydomonas smithii), this protein is 5-methylcytosine-modifying enzyme 1.